The following is a 908-amino-acid chain: Metabotropic glutamate receptor 8 (908 aa).

A signal peptide spans 1–33 (MVCEGKRLASCPCFFLLTAKFYWILTMMQRTHS). Residues 34 to 583 (QEYAHSIRVD…IIKLEWHSPW (550 aa)) are Extracellular-facing. Cysteine 64 and cysteine 106 are disulfide-bonded. Asparagine 95 is a glycosylation site (N-linked (GlcNAc...) asparagine). Residues serine 156, 177–179 (AST), and tyrosine 227 each bind L-glutamate. 7 disulfides stabilise this stretch: cysteine 246–cysteine 534, cysteine 369–cysteine 384, cysteine 424–cysteine 431, cysteine 516–cysteine 535, cysteine 520–cysteine 538, cysteine 541–cysteine 553, and cysteine 556–cysteine 569. The N-linked (GlcNAc...) asparagine glycan is linked to asparagine 298. Aspartate 309 lines the L-glutamate pocket. L-glutamate is bound at residue lysine 401. N-linked (GlcNAc...) asparagine glycosylation is found at asparagine 452 and asparagine 480. N-linked (GlcNAc...) asparagine glycosylation is present at asparagine 565. A helical membrane pass occupies residues 584–608 (AVVPVFIAILGIIATTFVIVTFVRY). The Cytoplasmic portion of the chain corresponds to 609–620 (NDTPIVRASGRE). Residues 621-641 (LSYVLLTGIFLCYSITFLMIA) form a helical membrane-spanning segment. At 642 to 647 (APDTII) the chain is on the extracellular side. Residues 648–668 (CSFRRIFLGLGMCFSYAALLT) traverse the membrane as a helical segment. The Cytoplasmic portion of the chain corresponds to 669-695 (KTNRIHRIFEQGKKSVTAPKFISPASQ). A helical transmembrane segment spans residues 696–716 (LVITFSLISVQLLGVFVWFVV). Residues 717–746 (DPPHTIIDYGEQRTLDPENARGVLKCDISD) are Extracellular-facing. The chain crosses the membrane as a helical span at residues 747–768 (LSLICSLGYSILLMVTCTVYAI). Topologically, residues 769–781 (KTRGVPETFNEAK) are cytoplasmic. Residues 782-803 (PIGFTMYTTCIIWLAFIPIFFG) form a helical membrane-spanning segment. Over 804 to 818 (TAQSAEKMYIQTTTL) the chain is Extracellular. Residues 819 to 843 (TVSMSLSASVSLGMLYMPKVYIIIF) traverse the membrane as a helical segment. The Cytoplasmic segment spans residues 844 to 908 (HPEQNVQKRK…TYISYSNHSI (65 aa)). A Glycyl lysine isopeptide (Lys-Gly) (interchain with G-Cter in SUMO1) cross-link involves residue lysine 882.

Belongs to the G-protein coupled receptor 3 family. As to quaternary structure, interacts with PICK1. As to expression, prominent expression in olfactory bulb, pontine gray, lateral reticular nucleus of the thalamus, and piriform cortex. Less abundant expression incerebral cortex, hippocampus, cerebellum, and mammillary body.

The protein localises to the cell membrane. In terms of biological role, G-protein coupled receptor for glutamate. Ligand binding causes a conformation change that triggers signaling via guanine nucleotide-binding proteins (G proteins) and modulates the activity of down-stream effectors. Signaling inhibits adenylate cyclase activity. The polypeptide is Metabotropic glutamate receptor 8 (Grm8) (Rattus norvegicus (Rat)).